The following is a 649-amino-acid chain: 1-deoxy-D-xylulose-5-phosphate synthase (649 aa).

Thiamine diphosphate is bound by residues His-84 and 125-127 (GHS). Asp-156 is a Mg(2+) binding site. Residues 157 to 158 (GS), Asn-185, Phe-292, and Glu-385 each bind thiamine diphosphate. Asn-185 contributes to the Mg(2+) binding site.

Belongs to the transketolase family. DXPS subfamily. In terms of assembly, homodimer. The cofactor is Mg(2+). Thiamine diphosphate serves as cofactor.

The catalysed reaction is D-glyceraldehyde 3-phosphate + pyruvate + H(+) = 1-deoxy-D-xylulose 5-phosphate + CO2. It participates in metabolic intermediate biosynthesis; 1-deoxy-D-xylulose 5-phosphate biosynthesis; 1-deoxy-D-xylulose 5-phosphate from D-glyceraldehyde 3-phosphate and pyruvate: step 1/1. Its function is as follows. Catalyzes the acyloin condensation reaction between C atoms 2 and 3 of pyruvate and glyceraldehyde 3-phosphate to yield 1-deoxy-D-xylulose-5-phosphate (DXP). This is 1-deoxy-D-xylulose-5-phosphate synthase from Saccharophagus degradans (strain 2-40 / ATCC 43961 / DSM 17024).